The following is a 240-amino-acid chain: MNAEKSPVNHNVDHEEIAKFEAVASRWWDLEGEFKPLHRINPLRLGYIAERAGGLFGKKVLDVGCGGGILAESMAREGATVTGLDMGFEPLQVAKLHALESGIQVDYVQETVEEHAAKYAGQYDVVTCMEMLEHVPDPQSVVRACAQLVKPGGDVFFSTLNRNGKSWLMAVVGAEYILRMVPKGTHDVKKFIKPAELLGWVDQTSLKERHMTGLHYNPITNTFKLGPGVDVNYMLHTQNK.

S-adenosyl-L-methionine contacts are provided by arginine 44, glycine 64, aspartate 85, and methionine 129.

Belongs to the methyltransferase superfamily. UbiG/COQ3 family.

The enzyme catalyses a 3-demethylubiquinol + S-adenosyl-L-methionine = a ubiquinol + S-adenosyl-L-homocysteine + H(+). The catalysed reaction is a 3-(all-trans-polyprenyl)benzene-1,2-diol + S-adenosyl-L-methionine = a 2-methoxy-6-(all-trans-polyprenyl)phenol + S-adenosyl-L-homocysteine + H(+). The protein operates within cofactor biosynthesis; ubiquinone biosynthesis. Functionally, O-methyltransferase that catalyzes the 2 O-methylation steps in the ubiquinone biosynthetic pathway. The protein is Ubiquinone biosynthesis O-methyltransferase of Escherichia coli O127:H6 (strain E2348/69 / EPEC).